The primary structure comprises 679 residues: Altered inheritance of mitochondria protein 21 (679 aa).

The disordered stretch occupies residues 1 to 85; that stretch reads MPSEVTPKVP…LQRPVRRSTT (85 aa). Residues 9-19 are compositionally biased toward basic and acidic residues; it reads VPERPSRRKTS. Phosphothreonine is present on Thr18. Ser36 is subject to Phosphoserine. The residue at position 58 (Thr58) is a Phosphothreonine. Ser70 is subject to Phosphoserine. Thr85 carries the post-translational modification Phosphothreonine. Ser104 carries the post-translational modification Phosphoserine. Positions 110–119 are enriched in basic residues; it reads NIHNVSRKKS. Disordered regions lie at residues 110–522, 549–580, and 593–679; these read NIHN…EKIE, IDTT…PNKM, and EKLP…FHSL. Composition is skewed to polar residues over residues 133–149 and 164–178; these read QNGQ…TNPS and SAIS…SNNE. A compositionally biased stretch (basic and acidic residues) spans 179 to 213; the sequence is VTEHSDSEDLTEKQKVHAALDNEAGDRSHFEEKLI. Phosphoserine is present on residues Ser183, Ser206, and Ser231. Positions 243–272 are enriched in basic and acidic residues; the sequence is SDDKAEKFTKHPESSLEELQKHQEQQEEKI. Thr277 is modified (phosphothreonine). At Ser284 the chain carries Phosphoserine. Positions 296–323 are enriched in polar residues; that stretch reads EVNSQPQGPSDTETVIAATSSNVPSQIA. The residue at position 324 (Ser324) is a Phosphoserine. 2 stretches are compositionally biased toward basic and acidic residues: residues 339 to 361 and 372 to 383; these read KKDF…RVSE and EESKIPKIPSER. Residues 383-396 are interaction with SH3 domain of ABP1; sequence RPKRRAPPPVPKKP. 2 stretches are compositionally biased toward polar residues: residues 414 to 427 and 437 to 452; these read DLHN…TTAS and SSIT…TSKL. Over residues 471–482 the composition is skewed to basic and acidic residues; sequence LEKKLSSPDTES. Basic residues predominate over residues 501 to 512; it reads RRGRGPRGRKLP. Thr552 carries the post-translational modification Phosphothreonine. Residues 556 to 576 show a composition bias toward basic and acidic residues; sequence QAERALDEKSKSIPEEQREQS. Ser576 is subject to Phosphoserine. The segment covering 603–613 has biased composition (polar residues); the sequence is PLSQLPQTNAV. Ser620, Ser623, Ser625, Ser627, Ser667, Ser671, Ser675, and Ser678 each carry phosphoserine. A compositionally biased stretch (basic and acidic residues) spans 667–679; it reads SALHSEEASFHSL.

The protein belongs to the AIM21 family. In terms of assembly, interacts with ribosomes. Interacts with ABP1.

The protein resides in the cytoplasm. It is found in the cytoskeleton. The protein localises to the actin patch. Functionally, involved in mitochondrial migration along actin filaments. The polypeptide is Altered inheritance of mitochondria protein 21 (AIM21) (Saccharomyces cerevisiae (strain ATCC 204508 / S288c) (Baker's yeast)).